Consider the following 387-residue polypeptide: Zinc finger protein neuro-d4 (387 aa).

Residues lysine 106, lysine 129, and lysine 133 each participate in a glycyl lysine isopeptide (Lys-Gly) (interchain with G-Cter in SUMO2) cross-link. A C2H2-type zinc finger spans residues 195-218 (YVCDICGKRYKNRPGLSYHYTHTH). 2 consecutive PHD-type zinc fingers follow at residues 271-328 (NGYC…CKSC) and 325-375 (CKSC…CLRH). Positions 274, 277, 293, 296, 301, 304, 322, 325, 328, 331, 343, 346, 351, 354, 369, and 372 each coordinate Zn(2+).

It belongs to the requiem/DPF family. As to quaternary structure, component of neuron-specific chromatin remodeling complex (nBAF complex) composed of at least, ARID1A/BAF250A or ARID1B/BAF250B, SMARCD1/BAF60A, SMARCD3/BAF60C, SMARCA2/BRM/BAF190B, SMARCA4/BRG1/BAF190A, SMARCB1/BAF47, SMARCC1/BAF155, SMARCE1/BAF57, SMARCC2/BAF170, DPF1/BAF45B, DPF3/BAF45C, ACTL6B/BAF53B and actin.

It is found in the cytoplasm. The protein resides in the nucleus. In terms of biological role, may have an important role in developing neurons by participating in regulation of cell survival, possibly as a neurospecific transcription factor. Belongs to the neuron-specific chromatin remodeling complex (nBAF complex). During neural development a switch from a stem/progenitor to a postmitotic chromatin remodeling mechanism occurs as neurons exit the cell cycle and become committed to their adult state. The transition from proliferating neural stem/progenitor cells to postmitotic neurons requires a switch in subunit composition of the npBAF and nBAF complexes. As neural progenitors exit mitosis and differentiate into neurons, npBAF complexes which contain ACTL6A/BAF53A and PHF10/BAF45A, are exchanged for homologous alternative ACTL6B/BAF53B and DPF1/BAF45B or DPF3/BAF45C subunits in neuron-specific complexes (nBAF). The npBAF complex is essential for the self-renewal/proliferative capacity of the multipotent neural stem cells. The nBAF complex along with CREST plays a role regulating the activity of genes essential for dendrite growth. The protein is Zinc finger protein neuro-d4 of Homo sapiens (Human).